The sequence spans 294 residues: Glycine--tRNA ligase alpha subunit (294 aa).

The protein belongs to the class-II aminoacyl-tRNA synthetase family. Tetramer of two alpha and two beta subunits.

The protein resides in the cytoplasm. The catalysed reaction is tRNA(Gly) + glycine + ATP = glycyl-tRNA(Gly) + AMP + diphosphate. This is Glycine--tRNA ligase alpha subunit from Natranaerobius thermophilus (strain ATCC BAA-1301 / DSM 18059 / JW/NM-WN-LF).